The primary structure comprises 152 residues: Superoxide dismutase [Cu-Zn] (152 aa).

A lipid anchor (S-palmitoyl cysteine) is attached at cysteine 7. Cu cation-binding residues include histidine 47, histidine 49, and histidine 64. The cysteines at positions 58 and 146 are disulfide-linked. Histidine 64, histidine 72, histidine 81, and aspartate 84 together coordinate Zn(2+). Histidine 120 lines the Cu cation pocket.

Belongs to the Cu-Zn superoxide dismutase family. Homodimer. Cu cation serves as cofactor. It depends on Zn(2+) as a cofactor.

The protein resides in the cytoplasm. It localises to the nucleus. The catalysed reaction is 2 superoxide + 2 H(+) = H2O2 + O2. In terms of biological role, destroys radicals which are normally produced within the cells and which are toxic to biological systems. In Xiphias gladius (Swordfish), this protein is Superoxide dismutase [Cu-Zn] (sod1).